We begin with the raw amino-acid sequence, 197 residues long: GTP cyclohydrolase-2 (197 aa).

A GTP-binding site is contributed by 50–54; that stretch reads RIHSE. The Zn(2+) site is built by C55, C66, and C68. GTP is bound by residues Q71, 93-95, and T115; that span reads EGR. Catalysis depends on D127, which acts as the Proton acceptor. The Nucleophile role is filled by R129. GTP is bound by residues T150 and K155.

This sequence belongs to the GTP cyclohydrolase II family. Zn(2+) serves as cofactor.

The enzyme catalyses GTP + 4 H2O = 2,5-diamino-6-hydroxy-4-(5-phosphoribosylamino)-pyrimidine + formate + 2 phosphate + 3 H(+). The protein operates within cofactor biosynthesis; riboflavin biosynthesis; 5-amino-6-(D-ribitylamino)uracil from GTP: step 1/4. Catalyzes the conversion of GTP to 2,5-diamino-6-ribosylamino-4(3H)-pyrimidinone 5'-phosphate (DARP), formate and pyrophosphate. This Aeromonas hydrophila subsp. hydrophila (strain ATCC 7966 / DSM 30187 / BCRC 13018 / CCUG 14551 / JCM 1027 / KCTC 2358 / NCIMB 9240 / NCTC 8049) protein is GTP cyclohydrolase-2.